Consider the following 376-residue polypeptide: Fibromodulin (376 aa).

A signal peptide spans 1–18; it reads MQWASILLLRGLCSLSQG. Glutamine 19 bears the Pyrrolidone carboxylic acid mark. 6 positions are modified to sulfotyrosine: tyrosine 20, tyrosine 38, tyrosine 53, tyrosine 55, tyrosine 63, and tyrosine 65. In terms of domain architecture, LRRNT spans 67–105; sequence APPPPEPRDCPQECDCPPNFPTAMYCDNRNLKYLPFVPS. 8 LRR repeats span residues 106-127, 130-143, 156-176, 177-198, 201-222, 224-245, 246-266, and 269-289; these read RMKY…VFDN, GLLW…QITS, HLER…PLPR, SLRE…ALEG, NLTA…MRGL, SLIL…LPSA, LEQL…YFRG, and KLLY…ATNT. N-linked (GlcNAc...) (keratan sulfate) asparagine glycosylation is present at asparagine 127. Asparagine 166 is a glycosylation site (N-linked (GlcNAc...) (keratan sulfate) asparagine). An N-linked (GlcNAc...) (keratan sulfate) asparagine glycan is attached at asparagine 201. Asparagine 291 is a glycosylation site (N-linked (GlcNAc...) (keratan sulfate) asparagine). LRR repeat units lie at residues 294–315 and 316–335; these read SLLE…NTNL and ENLY…SFCT. A disulfide bridge links cysteine 334 with cysteine 367. Asparagine 341 is a glycosylation site (N-linked (GlcNAc...) asparagine). Residues 344-367 form an LRR 11 repeat; the sequence is KLQVLRLDGNEIKRSAMPVDAPLC.

Belongs to the small leucine-rich proteoglycan (SLRP) family. SLRP class II subfamily. In terms of assembly, binds to type I and type II collagen. Binds keratan sulfate chains.

It is found in the secreted. It localises to the extracellular space. The protein localises to the extracellular matrix. Its function is as follows. Affects the rate of fibrils formation. May have a primary role in collagen fibrillogenesis. This chain is Fibromodulin (Fmod), found in Rattus norvegicus (Rat).